Consider the following 283-residue polypeptide: 4-diphosphocytidyl-2-C-methyl-D-erythritol kinase (283 aa).

K8 is a catalytic residue. An ATP-binding site is contributed by 90–100; sequence PIGSGLAGGSS. Residue D132 is part of the active site.

Belongs to the GHMP kinase family. IspE subfamily.

It catalyses the reaction 4-CDP-2-C-methyl-D-erythritol + ATP = 4-CDP-2-C-methyl-D-erythritol 2-phosphate + ADP + H(+). The protein operates within isoprenoid biosynthesis; isopentenyl diphosphate biosynthesis via DXP pathway; isopentenyl diphosphate from 1-deoxy-D-xylulose 5-phosphate: step 3/6. In terms of biological role, catalyzes the phosphorylation of the position 2 hydroxy group of 4-diphosphocytidyl-2C-methyl-D-erythritol. In Chlamydia muridarum (strain MoPn / Nigg), this protein is 4-diphosphocytidyl-2-C-methyl-D-erythritol kinase.